The sequence spans 329 residues: DNA-directed RNA polymerase subunit alpha (329 aa).

Residues 1 to 235 (MQGSVTEFLK…EQLEAFVDLR (235 aa)) form an alpha N-terminal domain (alpha-NTD) region. The interval 249 to 329 (FDPILLRPVD…NWPPASIADE (81 aa)) is alpha C-terminal domain (alpha-CTD).

It belongs to the RNA polymerase alpha chain family. As to quaternary structure, homodimer. The RNAP catalytic core consists of 2 alpha, 1 beta, 1 beta' and 1 omega subunit. When a sigma factor is associated with the core the holoenzyme is formed, which can initiate transcription.

It carries out the reaction RNA(n) + a ribonucleoside 5'-triphosphate = RNA(n+1) + diphosphate. Its function is as follows. DNA-dependent RNA polymerase catalyzes the transcription of DNA into RNA using the four ribonucleoside triphosphates as substrates. This Photorhabdus laumondii subsp. laumondii (strain DSM 15139 / CIP 105565 / TT01) (Photorhabdus luminescens subsp. laumondii) protein is DNA-directed RNA polymerase subunit alpha.